The sequence spans 590 residues: Mitochondrial distribution and morphology protein 34 (590 aa).

An SMP-LTD domain is found at 1-225; it reads MSFIFNRETF…LPSVIFNMSQ (225 aa). Residues 393-405 are compositionally biased toward basic residues; that stretch reads RRKIKMRSRKPSK. Residues 393 to 456 are disordered; sequence RRKIKMRSRK…APEGGPNAED (64 aa). The span at 413–427 shows a compositional bias: polar residues; it reads PAQNDSGTSSCSNVA.

It belongs to the MDM34 family. As to quaternary structure, component of the ER-mitochondria encounter structure (ERMES) or MDM complex, composed of MMM1, MDM10, MDM12 and MDM34.

It localises to the mitochondrion outer membrane. Component of the ERMES/MDM complex, which serves as a molecular tether to connect the endoplasmic reticulum (ER) and mitochondria. Components of this complex are involved in the control of mitochondrial shape and protein biogenesis, and function in nonvesicular lipid trafficking between the ER and mitochondria. MDM34 is required for the interaction of the ER-resident membrane protein MMM1 and the outer mitochondrial membrane-resident beta-barrel protein MDM10. This is Mitochondrial distribution and morphology protein 34 from Eremothecium gossypii (strain ATCC 10895 / CBS 109.51 / FGSC 9923 / NRRL Y-1056) (Yeast).